The following is a 439-amino-acid chain: Magnesium-dependent glutamate N-prenyltransferase (439 aa).

The Mg(2+) site is built by asparagine 322, threonine 326, glutamate 330, and phenylalanine 337.

Belongs to the terpene synthase family. Mg(2+) serves as cofactor.

It carries out the reaction dimethylallyl diphosphate + L-glutamate = prekainate + diphosphate. It functions in the pathway secondary metabolite biosynthesis. Its function is as follows. Magnesium-dependent glutamate N-prenyltransferase: part of the gene cluster that mediates the biosynthesis of kainic acid (KA) and derivatives, natural products with neurochemical activity acting as ionotropic glutamate receptor (iGluR) agonists, thus being neurotoxins. Catalyzes the conversion of L-glutamic acid (L-Glu) to prekainic acid in the presence of dimethylallyl diphosphate (DMAPP). Can also use geranyl diphosphate (GPP) as substrate, thus leading to the formation of N-geranyl-L-glutamic acid (L-NGG). This chain is Magnesium-dependent glutamate N-prenyltransferase, found in Digenea simplex (Marine red alga).